A 331-amino-acid chain; its full sequence is Ketol-acid reductoisomerase (NADP(+)) (331 aa).

Residues 2 to 182 form the KARI N-terminal Rossmann domain; it reads ARMYYDEDAN…GGTRGGVLET (181 aa). NADP(+) contacts are provided by residues 25 to 28, Ser51, Ser53, and 83 to 86; these read YGSQ and DEVQ. Residue His108 is part of the active site. Position 134 (Gly134) interacts with NADP(+). Residues 183–328 form the KARI C-terminal knotted domain; that stretch reads TFREETETDL…KDLRAMFSWL (146 aa). Mg(2+) is bound by residues Asp191, Glu195, Glu227, and Glu231. Ser252 lines the substrate pocket.

This sequence belongs to the ketol-acid reductoisomerase family. It depends on Mg(2+) as a cofactor.

It carries out the reaction (2R)-2,3-dihydroxy-3-methylbutanoate + NADP(+) = (2S)-2-acetolactate + NADPH + H(+). The enzyme catalyses (2R,3R)-2,3-dihydroxy-3-methylpentanoate + NADP(+) = (S)-2-ethyl-2-hydroxy-3-oxobutanoate + NADPH + H(+). It functions in the pathway amino-acid biosynthesis; L-isoleucine biosynthesis; L-isoleucine from 2-oxobutanoate: step 2/4. Its pathway is amino-acid biosynthesis; L-valine biosynthesis; L-valine from pyruvate: step 2/4. Its function is as follows. Involved in the biosynthesis of branched-chain amino acids (BCAA). Catalyzes an alkyl-migration followed by a ketol-acid reduction of (S)-2-acetolactate (S2AL) to yield (R)-2,3-dihydroxy-isovalerate. In the isomerase reaction, S2AL is rearranged via a Mg-dependent methyl migration to produce 3-hydroxy-3-methyl-2-ketobutyrate (HMKB). In the reductase reaction, this 2-ketoacid undergoes a metal-dependent reduction by NADPH to yield (R)-2,3-dihydroxy-isovalerate. This Nostoc sp. (strain PCC 7120 / SAG 25.82 / UTEX 2576) protein is Ketol-acid reductoisomerase (NADP(+)).